We begin with the raw amino-acid sequence, 209 residues long: Abscisic acid receptor PYL3 (209 aa).

Positions 1–23 are disordered; it reads MNLAPIHDPSSSSTTTTSSSTPY. A compositionally biased stretch (low complexity) spans 10-21; sequence SSSSTTTTSSST. The START-like stretch occupies residues 43 to 205; that stretch reads FPRSPNTCTS…NLQNLAVIST (163 aa). Residues lysine 79, 113–118, 140–146, and glutamate 170 each bind abscisate; these read ASTSVE and RLNNYRS. The Gate loop motif lies at 109–113; that stretch reads SGLPA. The Latch loop motif lies at 139-141; that stretch reads HRL.

This sequence belongs to the PYR/PYL/RCAR abscisic acid intracellular receptor family. In terms of assembly, homodimer and monomer. Binds ABA on one subunit only. ABA-binding favors monomer and trans-homodimer intermediate, and increases PP2C inhibitor activity. Binds both (-)-ABA and (+)-ABA. Binds to CARs protein in an ABA-independent manner, both at the plasma membrane and in the nucleus. Interacts with HAB1, ABI1 and ABI2, and possibly with other PP2Cs.

It is found in the cytoplasm. It localises to the nucleus. Its subcellular location is the cell membrane. Functionally, receptor for abscisic acid (ABA) required for ABA-mediated responses such as stomatal closure and germination inhibition. Inhibits the activity of group-A protein phosphatases type 2C (PP2Cs) when activated by ABA. Can be activated by both (-)-ABA and (+)-ABA. The polypeptide is Abscisic acid receptor PYL3 (PYL3) (Arabidopsis thaliana (Mouse-ear cress)).